Here is a 248-residue protein sequence, read N- to C-terminus: UPF0736 protein BcerKBAB4_1085 (248 aa).

This sequence belongs to the UPF0736 family.

The chain is UPF0736 protein BcerKBAB4_1085 from Bacillus mycoides (strain KBAB4) (Bacillus weihenstephanensis).